A 451-amino-acid polypeptide reads, in one-letter code: uncharacterized protein (451 aa).

The HD domain occupies 50–147 (RFEHSLGTMF…DVDADRMDYL (98 aa)).

This is an uncharacterized protein from Methanocaldococcus jannaschii (strain ATCC 43067 / DSM 2661 / JAL-1 / JCM 10045 / NBRC 100440) (Methanococcus jannaschii).